We begin with the raw amino-acid sequence, 236 residues long: Glucosamine-6-phosphate deaminase (236 aa).

The Proton acceptor; for enolization step role is filled by Asp62. Residue Asn128 is the For ring-opening step of the active site. The active-site Proton acceptor; for ring-opening step is the His130. Glu135 (for ring-opening step) is an active-site residue.

This sequence belongs to the glucosamine/galactosamine-6-phosphate isomerase family. NagB subfamily.

The catalysed reaction is alpha-D-glucosamine 6-phosphate + H2O = beta-D-fructose 6-phosphate + NH4(+). It functions in the pathway amino-sugar metabolism; N-acetylneuraminate degradation; D-fructose 6-phosphate from N-acetylneuraminate: step 5/5. Catalyzes the reversible isomerization-deamination of glucosamine 6-phosphate (GlcN6P) to form fructose 6-phosphate (Fru6P) and ammonium ion. This Pediococcus pentosaceus (strain ATCC 25745 / CCUG 21536 / LMG 10740 / 183-1w) protein is Glucosamine-6-phosphate deaminase.